We begin with the raw amino-acid sequence, 64 residues long: Large ribosomal subunit protein bL28 (64 aa).

It belongs to the bacterial ribosomal protein bL28 family.

In Trichlorobacter lovleyi (strain ATCC BAA-1151 / DSM 17278 / SZ) (Geobacter lovleyi), this protein is Large ribosomal subunit protein bL28.